A 51-amino-acid polypeptide reads, in one-letter code: Ovomucoid (51 aa).

The Kazal-like domain maps to 3 to 51 (VDCSGYPKPACTLEYFPLCGSDNQTYANKCTFCNAVVEKNVTLNHLGEC). 3 disulfide bridges follow: C5/C35, C13/C32, and C21/C51. N42 carries N-linked (GlcNAc...) asparagine glycosylation.

It is found in the secreted. The polypeptide is Ovomucoid (Nothoprocta perdicaria (Chilean tinamou)).